Reading from the N-terminus, the 104-residue chain is L-rhamnose mutarotase (104 aa).

Tyrosine 18 provides a ligand contact to substrate. Histidine 22 functions as the Proton donor in the catalytic mechanism. Substrate is bound by residues tyrosine 41 and 76–77; that span reads WW.

The protein belongs to the rhamnose mutarotase family. In terms of assembly, homodimer.

The protein localises to the cytoplasm. It carries out the reaction alpha-L-rhamnose = beta-L-rhamnose. Its pathway is carbohydrate metabolism; L-rhamnose metabolism. Involved in the anomeric conversion of L-rhamnose. This chain is L-rhamnose mutarotase, found in Escherichia coli O1:K1 / APEC.